The sequence spans 110 residues: UPF0339 protein YegP (110 aa).

A run of 2 repeats spans residues 10 to 58 and 61 to 109.

Belongs to the UPF0339 family. Duplicated subfamily.

This Escherichia coli O157:H7 protein is UPF0339 protein YegP (yegP).